Consider the following 308-residue polypeptide: ATP synthase gamma chain (308 aa).

It belongs to the ATPase gamma chain family. As to quaternary structure, F-type ATPases have 2 components, CF(1) - the catalytic core - and CF(0) - the membrane proton channel. CF(1) has five subunits: alpha(3), beta(3), gamma(1), delta(1), epsilon(1). CF(0) has three main subunits: a, b and c.

It localises to the cell membrane. Functionally, produces ATP from ADP in the presence of a proton gradient across the membrane. The gamma chain is believed to be important in regulating ATPase activity and the flow of protons through the CF(0) complex. The protein is ATP synthase gamma chain of Lacticaseibacillus casei (strain BL23) (Lactobacillus casei).